The sequence spans 405 residues: 4-hydroxy-3-methylbut-2-enyl diphosphate reductase (405 aa).

Cysteine 66 provides a ligand contact to [4Fe-4S] cluster. A (2E)-4-hydroxy-3-methylbut-2-enyl diphosphate-binding site is contributed by histidine 96. Histidine 96 lines the dimethylallyl diphosphate pocket. Histidine 96 lines the isopentenyl diphosphate pocket. Residue cysteine 157 participates in [4Fe-4S] cluster binding. A (2E)-4-hydroxy-3-methylbut-2-enyl diphosphate-binding site is contributed by histidine 185. Histidine 185 lines the dimethylallyl diphosphate pocket. Histidine 185 is an isopentenyl diphosphate binding site. Glutamate 187 (proton donor) is an active-site residue. Threonine 250 provides a ligand contact to (2E)-4-hydroxy-3-methylbut-2-enyl diphosphate. Position 288 (cysteine 288) interacts with [4Fe-4S] cluster. 4 residues coordinate (2E)-4-hydroxy-3-methylbut-2-enyl diphosphate: serine 317, serine 318, asparagine 319, and serine 380. Dimethylallyl diphosphate-binding residues include serine 317, serine 318, asparagine 319, and serine 380. Serine 317, serine 318, asparagine 319, and serine 380 together coordinate isopentenyl diphosphate.

Belongs to the IspH family. [4Fe-4S] cluster is required as a cofactor.

It carries out the reaction isopentenyl diphosphate + 2 oxidized [2Fe-2S]-[ferredoxin] + H2O = (2E)-4-hydroxy-3-methylbut-2-enyl diphosphate + 2 reduced [2Fe-2S]-[ferredoxin] + 2 H(+). The enzyme catalyses dimethylallyl diphosphate + 2 oxidized [2Fe-2S]-[ferredoxin] + H2O = (2E)-4-hydroxy-3-methylbut-2-enyl diphosphate + 2 reduced [2Fe-2S]-[ferredoxin] + 2 H(+). It participates in isoprenoid biosynthesis; dimethylallyl diphosphate biosynthesis; dimethylallyl diphosphate from (2E)-4-hydroxy-3-methylbutenyl diphosphate: step 1/1. The protein operates within isoprenoid biosynthesis; isopentenyl diphosphate biosynthesis via DXP pathway; isopentenyl diphosphate from 1-deoxy-D-xylulose 5-phosphate: step 6/6. Functionally, catalyzes the conversion of 1-hydroxy-2-methyl-2-(E)-butenyl 4-diphosphate (HMBPP) into a mixture of isopentenyl diphosphate (IPP) and dimethylallyl diphosphate (DMAPP). Acts in the terminal step of the DOXP/MEP pathway for isoprenoid precursor biosynthesis. This Prochlorococcus marinus (strain SARG / CCMP1375 / SS120) protein is 4-hydroxy-3-methylbut-2-enyl diphosphate reductase.